A 449-amino-acid polypeptide reads, in one-letter code: G-protein coupled receptor 61 (449 aa).

Residues 1-14 are compositionally biased toward low complexity; sequence MESSPIPQSSGNSS. A disordered region spans residues 1 to 29; the sequence is MESSPIPQSSGNSSTLGRALQTPGPSTAS. Residues 1 to 44 are Extracellular-facing; the sequence is MESSPIPQSSGNSSTLGRALQTPGPSTASGVPELGLRDVASESV. Asparagine 12 carries an N-linked (GlcNAc...) asparagine glycan. Residues 45–67 traverse the membrane as a helical segment; the sequence is ALFFMLLLDLTAVAGNAAVMAVI. Topologically, residues 68-75 are cytoplasmic; it reads AKTPALRK. Residues 76 to 98 form a helical membrane-spanning segment; the sequence is FVFVFHLCLVDLLAALTLMPLAM. At 99 to 112 the chain is on the extracellular side; sequence LSSSALFDHALFGE. The chain crosses the membrane as a helical span at residues 113 to 135; that stretch reads VACRLYLFLSVCFVSLAILSVSA. Over 136 to 155 the chain is Cytoplasmic; that stretch reads INVERYYYVVHPMRYEVRMT. The helical transmembrane segment at 156–178 threads the bilayer; it reads LGLVASVLVGVWVKALAMASVPV. At 179-206 the chain is on the extracellular side; that stretch reads LGRVYWEEGAPSVNPGCSLQWSHSAYCQ. The helical transmembrane segment at 207 to 229 threads the bilayer; the sequence is LFVVVFAVLYFLLPLILIFVVYC. Residues 230–287 lie on the Cytoplasmic side of the membrane; it reads SMFRVARVAAMQHGPLPTWMETPRQRSESLSSRSTMVTSSGAHQTTPHRTFGGGKAAV. The helical transmembrane segment at 288-310 threads the bilayer; it reads VLLAVGGQFLLCWLPYFSFHLYV. Over 311–324 the chain is Extracellular; the sequence is ALSAQPISAGQVEN. Residues 325–344 traverse the membrane as a helical segment; the sequence is VVTWIGYFCFTSNPFFYGCL. Residues 345-449 are Cytoplasmic-facing; that stretch reads NRQIRGELSK…RPAPSPRLES (105 aa).

The protein belongs to the G-protein coupled receptor 1 family. As to quaternary structure, forms heterodimer with MTNR1B. Interacts with ARRB1 and ARRB2 in a spontaneous and agonist-independent manner; leading to the internalization of GPR61 in the endosomal compartment. In terms of tissue distribution, predominantly expressed in the brain and testes, with relatively lower expression observed in the eye, adrenal gland and pituitary gland.

Its subcellular location is the cell membrane. The protein localises to the endosome membrane. In terms of biological role, orphan G-protein coupled receptor. Constitutively activates the G(s)-alpha/cAMP signaling pathway. Shows a reciprocal regulatory interaction with the melatonin receptor MTNR1B most likely through receptor heteromerization. May be involved in the regulation of food intake and body weight. The polypeptide is G-protein coupled receptor 61 (Gpr61) (Mus musculus (Mouse)).